A 325-amino-acid chain; its full sequence is Tagatose 1,6-diphosphate aldolase (325 aa).

Belongs to the aldolase LacD family.

It carries out the reaction D-tagatofuranose 1,6-bisphosphate = D-glyceraldehyde 3-phosphate + dihydroxyacetone phosphate. The protein operates within carbohydrate metabolism; D-tagatose 6-phosphate degradation; D-glyceraldehyde 3-phosphate and glycerone phosphate from D-tagatose 6-phosphate: step 2/2. In Staphylococcus epidermidis (strain ATCC 35984 / DSM 28319 / BCRC 17069 / CCUG 31568 / BM 3577 / RP62A), this protein is Tagatose 1,6-diphosphate aldolase.